A 908-amino-acid chain; its full sequence is Zinc finger and BTB domain-containing protein 41 (908 aa).

A disordered region spans residues 38 to 59; sequence TQAPERPTPEAAQRCQELPPSP. A BTB domain is found at 89–153; it reads CDLLIIVEGK…LYTSEFFVYK (65 aa). Residues 208–231 form a C2H2-type 1 zinc finger; that stretch reads HQCKFCSRHFCYKKSLENHLAKTH. Residues 252–261 are compositionally biased toward basic residues; it reads RRSKRNRKCP. The segment at 252–344 is disordered; it reads RRSKRNRKCP…EAGDSAGSIH (93 aa). The span at 267 to 276 shows a compositional bias: acidic residues; sequence TSDDEQESGD. The segment covering 279–296 has biased composition (basic and acidic residues); that stretch reads DNLHQESSEKERSDRNDS. Over residues 297–336 the composition is skewed to acidic residues; that stretch reads EDPGSEYNAEDEELEEEVSDEDSDTEQSDKDNDAEEEPEA. 13 consecutive C2H2-type zinc fingers follow at residues 360-382, 388-410, 421-444, 462-484, 490-513, 517-540, 546-568, 574-596, 602-624, 630-653, 667-689, 695-717, and 723-746; these read LQCP…TRVH, FECD…RKKH, HKCP…KRFH, WKCD…MILH, FKCT…EKFH, FPCD…ECTH, WTCF…LRIH, HLCS…LRVH, YECD…KKIH, HQCE…KSVH, HQCD…FRTH, YKCQ…LVIH, and FNCQ…DHVH.

It is found in the nucleus. May be involved in transcriptional regulation. The chain is Zinc finger and BTB domain-containing protein 41 (Zbtb41) from Mus musculus (Mouse).